We begin with the raw amino-acid sequence, 874 residues long: GRB2-associated and regulator of MAPK protein 2 (874 aa).

The CABIT stretch occupies residues 12 to 339; the sequence is RWSMGAFPLD…LLAGDPRVER (328 aa). Residues 188-206 are compositionally biased toward gly residues; that stretch reads GGGGPASAGAAGGTGGGGA. 5 disordered regions span residues 188–207, 388–422, 437–545, 563–598, and 625–742; these read GGGG…GGAR, PGLA…EPAA, GPEG…SPSP, GESS…AASL, and APFG…PSKA. Low complexity-rich tracts occupy residues 388-403 and 518-545; these read PGLA…APAG and SPSS…SPSP. Residues 575–585 are compositionally biased toward polar residues; sequence PSTTQPSQASR. 2 stretches are compositionally biased toward low complexity: residues 632–650 and 658–691; these read PFSG…SSGP and ATSG…SSSS. Residue serine 735 is modified to Phosphoserine. The 65-residue stretch at 807-871 folds into the SAM domain; sequence SALSLEEVSR…KIMQFIKGWR (65 aa).

This sequence belongs to the GAREM family.

Probable adapter protein that may provide a link between cell surface epidermal growth factor receptor and the MAPK/ERK signaling pathway. This is GRB2-associated and regulator of MAPK protein 2 (GAREM2) from Homo sapiens (Human).